Reading from the N-terminus, the 157-residue chain is MLPELRVLYFEDLEVGLTEILKKEISSSDVVGFAEITGDRNPIHLSEHFAARTPFGTRIAHGLYTAGLISAVLGTRLPGPGAVYISQTLNFRAPVRIGDIVEVKVEVAELIPERRRARLACTCSVGDEVVLDGEALVKVPKKEEADPLAMRMGGGRA.

Residues 22-120 form the MaoC-like domain; it reads KKEISSSDVV…IPERRRARLA (99 aa).

The catalysed reaction is (3R)-3-hydroxybutanoyl-CoA = (2E)-butenoyl-CoA + H2O. Involved in the regeneration of glyoxylate from a molecule of acetyl-CoA. This Methylorubrum extorquens (strain ATCC 14718 / DSM 1338 / JCM 2805 / NCIMB 9133 / AM1) (Methylobacterium extorquens) protein is 3-hydroxybutyryl-CoA dehydratase.